Here is a 337-residue protein sequence, read N- to C-terminus: Biotin synthase (337 aa).

In terms of domain architecture, Radical SAM core spans 55 to 284 (YFKNTIELCS…KKTILLAGGK (230 aa)). The [4Fe-4S] cluster site is built by Cys73, Cys77, and Cys80. [2Fe-2S] cluster-binding residues include Cys117, Cys149, and Cys209.

Belongs to the radical SAM superfamily. Biotin synthase family. As to quaternary structure, homodimer. [4Fe-4S] cluster is required as a cofactor. [2Fe-2S] cluster serves as cofactor.

The catalysed reaction is (4R,5S)-dethiobiotin + (sulfur carrier)-SH + 2 reduced [2Fe-2S]-[ferredoxin] + 2 S-adenosyl-L-methionine = (sulfur carrier)-H + biotin + 2 5'-deoxyadenosine + 2 L-methionine + 2 oxidized [2Fe-2S]-[ferredoxin]. It participates in cofactor biosynthesis; biotin biosynthesis; biotin from 7,8-diaminononanoate: step 2/2. In terms of biological role, catalyzes the conversion of dethiobiotin (DTB) to biotin by the insertion of a sulfur atom into dethiobiotin via a radical-based mechanism. In Caldicellulosiruptor bescii (strain ATCC BAA-1888 / DSM 6725 / KCTC 15123 / Z-1320) (Anaerocellum thermophilum), this protein is Biotin synthase.